The chain runs to 402 residues: MKKEKRLFTSESVSEGHPDKVADQISDAILDAILAKDPDGRVACETTVTTGLVLVVGEISTSAYVDIQSVVRKTILEIGYNRPELGFDGNNCAILVDIDEQSSDIADGVNESLETRENQQDKDDLDKIGAGDQGLMFGFAIKETPELMPLPISLAHSLMRRVASLRKEGRLDWLRPDAKAQVTVEYDDENKPKRIDTVVISTQTDATVSNDEIREAMIDMVIKKVIPSQYLDKDTKFLINPSGRFVIGGPKGDSGLTGRKIIVDTYGGYARHGGGAFSGKDLTKVDRSASYAARYVAKNIVAAGLAYQCEIQLAYAIGVAHPVSIMVDTHGTSKVSEDLLVEAVRNVFDLRPAGIIEMLNLKRPIYRQTAAYGHFGRTDVDLPWEHTDKVEALKTYVSEHAE.

An ATP-binding site is contributed by His-17. Asp-19 lines the Mg(2+) pocket. A K(+)-binding site is contributed by Glu-45. Positions 58 and 101 each coordinate L-methionine. The segment at 101-111 (QSSDIADGVNE) is flexible loop. Residues 177–179 (DAK), 244–245 (RF), Asp-253, 259–260 (RK), Ala-276, and Lys-280 each bind ATP. Residue Asp-253 participates in L-methionine binding. L-methionine is bound at residue Lys-284.

Belongs to the AdoMet synthase family. Homotetramer; dimer of dimers. The cofactor is Mg(2+). Requires K(+) as cofactor.

It localises to the cytoplasm. It carries out the reaction L-methionine + ATP + H2O = S-adenosyl-L-methionine + phosphate + diphosphate. It participates in amino-acid biosynthesis; S-adenosyl-L-methionine biosynthesis; S-adenosyl-L-methionine from L-methionine: step 1/1. In terms of biological role, catalyzes the formation of S-adenosylmethionine (AdoMet) from methionine and ATP. The overall synthetic reaction is composed of two sequential steps, AdoMet formation and the subsequent tripolyphosphate hydrolysis which occurs prior to release of AdoMet from the enzyme. The chain is S-adenosylmethionine synthase from Lactobacillus johnsonii (strain CNCM I-12250 / La1 / NCC 533).